Consider the following 75-residue polypeptide: Small ribosomal subunit protein bS18 (75 aa).

It belongs to the bacterial ribosomal protein bS18 family. As to quaternary structure, part of the 30S ribosomal subunit. Forms a tight heterodimer with protein bS6.

Functionally, binds as a heterodimer with protein bS6 to the central domain of the 16S rRNA, where it helps stabilize the platform of the 30S subunit. The polypeptide is Small ribosomal subunit protein bS18 (Paracoccus denitrificans (strain Pd 1222)).